We begin with the raw amino-acid sequence, 596 residues long: Phosphoprotein (596 aa).

3 stretches are compositionally biased toward polar residues: residues 1–11 (MENNAKDNQIM), 38–66 (TDSQ…QLES), and 74–85 (ENSGSVNENRQL). Disordered stretches follow at residues 1-25 (MENN…SSDI), 38-196 (TDSQ…ESIS), and 220-352 (KNTR…EEST). Residues 33–41 (EFILSTDSQ) form an N0 binding region. Basic and acidic residues predominate over residues 88–97 (SHERATETKN). The segment covering 127–144 (ISRSSPDPNNGTQIQESI) has biased composition (polar residues). Basic and acidic residues-rich tracts occupy residues 151–168 (EMDK…KDVP) and 233–249 (EDDK…EDTN). The segment covering 270–324 (TLKISTTTGESTRPQSGSQGKRITSWNILNSESGSRTESTSQNSQIPTSGKSNTV) has biased composition (polar residues). A compositionally biased stretch (basic and acidic residues) spans 331–352 (LESRIKTQKTDGKEREDTEEST). The multimerization stretch occupies residues 374 to 441 (LDLYQDKRVV…KMDESHRRLI (68 aa)). Residues 416–436 (LNQIQNEILSLKTDLKKMDES) adopt a coiled-coil conformation. Positions 442-475 (ENQKEQLSLITSLISNLKIMTERGGKKDQPENSG) are l protein binding.

This sequence belongs to the respirovirus P protein family. In terms of assembly, homotetramer. Interacts (via multimerization domain) with polymerase L; this interaction forms the polymerase complex. Interacts (via N-terminus) with N0; this interaction allows P to chaperon N0 before encapsidation and form the N-P complex. Interacts (via C-terminus) with N-RNA template; this interaction positions the polymerase on the template.

Essential cofactor of the RNA polymerase L that plays a central role in the transcription and replication by forming the polymerase complex with RNA polymerase L and recruiting L to the genomic N-RNA template for RNA synthesis. Also plays a central role in the encapsidation of nascent RNA chains by forming the encapsidation complex with the nucleocapsid protein N (N-P complex). Acts as a chaperone for newly synthesized free N protein, so-called N0, allowing encapsidation of nascent RNA chains during replication. The nucleoprotein protein N prevents excessive phosphorylation of P, which leads to down-regulation of viral transcription/ replication. Participates, together with N, in the formation of viral factories (viroplasms), which are large inclusions in the host cytoplasm where replication takes place. Recruits host PI4KB and remodel the host endoplasmic reticulum membrane to form viral replication factories. The sequence is that of Phosphoprotein (P/V/D) from Bovine parainfluenza 3 virus (BPIV-3).